The sequence spans 477 residues: Bifunctional protein HldE (477 aa).

Positions 1-318 (MKVNLPAFER…ENAVRGRADT (318 aa)) are ribokinase. 195–198 (NLSE) serves as a coordination point for ATP. Aspartate 264 is a catalytic residue. The cytidylyltransferase stretch occupies residues 344-477 (MTNGVFDILH…IKKIQTESEK (134 aa)).

In the N-terminal section; belongs to the carbohydrate kinase PfkB family. This sequence in the C-terminal section; belongs to the cytidylyltransferase family. In terms of assembly, homodimer.

The enzyme catalyses D-glycero-beta-D-manno-heptose 7-phosphate + ATP = D-glycero-beta-D-manno-heptose 1,7-bisphosphate + ADP + H(+). The catalysed reaction is D-glycero-beta-D-manno-heptose 1-phosphate + ATP + H(+) = ADP-D-glycero-beta-D-manno-heptose + diphosphate. The protein operates within nucleotide-sugar biosynthesis; ADP-L-glycero-beta-D-manno-heptose biosynthesis; ADP-L-glycero-beta-D-manno-heptose from D-glycero-beta-D-manno-heptose 7-phosphate: step 1/4. Its pathway is nucleotide-sugar biosynthesis; ADP-L-glycero-beta-D-manno-heptose biosynthesis; ADP-L-glycero-beta-D-manno-heptose from D-glycero-beta-D-manno-heptose 7-phosphate: step 3/4. In terms of biological role, catalyzes the phosphorylation of D-glycero-D-manno-heptose 7-phosphate at the C-1 position to selectively form D-glycero-beta-D-manno-heptose-1,7-bisphosphate. Functionally, catalyzes the ADP transfer from ATP to D-glycero-beta-D-manno-heptose 1-phosphate, yielding ADP-D-glycero-beta-D-manno-heptose. This chain is Bifunctional protein HldE, found in Salmonella dublin (strain CT_02021853).